Reading from the N-terminus, the 204-residue chain is Viral interleukin-6 homolog (204 aa).

An N-terminal signal peptide occupies residues 1–22; that stretch reads MRWFKLWSILLVGSLLVSGTRG.

It belongs to the IL-6 superfamily. Interacts with host IL6ST.

Initiates signal transduction through binding to interleukin-6 receptor subunit beta IL6ST, independently of the cognate IL6 receptor IL6R. In infected primary effusion lymphoma cells, promotes proliferation of cells, protects them from apoptosis, and promotes immune evasion of interferon activity. Also drives blood to lymphatic endothelial cell differentiation. This is Viral interleukin-6 homolog (K2) from Homo sapiens (Human).